Consider the following 983-residue polypeptide: Bifunctional glutamine synthetase adenylyltransferase/adenylyl-removing enzyme (983 aa).

Positions 1–490 (MDRKSSVTID…AHGQVFYSPV (490 aa)) are adenylyl removase. The adenylyl transferase stretch occupies residues 496–983 (RIPTQDLRMS…RVVDAVFWNQ (488 aa)).

Belongs to the GlnE family. It depends on Mg(2+) as a cofactor.

The enzyme catalyses [glutamine synthetase]-O(4)-(5'-adenylyl)-L-tyrosine + phosphate = [glutamine synthetase]-L-tyrosine + ADP. It catalyses the reaction [glutamine synthetase]-L-tyrosine + ATP = [glutamine synthetase]-O(4)-(5'-adenylyl)-L-tyrosine + diphosphate. In terms of biological role, involved in the regulation of glutamine synthetase GlnA, a key enzyme in the process to assimilate ammonia. When cellular nitrogen levels are high, the C-terminal adenylyl transferase (AT) inactivates GlnA by covalent transfer of an adenylyl group from ATP to specific tyrosine residue of GlnA, thus reducing its activity. Conversely, when nitrogen levels are low, the N-terminal adenylyl removase (AR) activates GlnA by removing the adenylyl group by phosphorolysis, increasing its activity. The regulatory region of GlnE binds the signal transduction protein PII (GlnB) which indicates the nitrogen status of the cell. This Cutibacterium acnes (strain DSM 16379 / KPA171202) (Propionibacterium acnes) protein is Bifunctional glutamine synthetase adenylyltransferase/adenylyl-removing enzyme.